The following is a 299-amino-acid chain: Taste receptor type 2 member 50 (299 aa).

A topological domain (extracellular) is located at residue Met1. Residues 2-22 (ITFLYIFFSILIMVLFVLGNF) form a helical membrane-spanning segment. Residues 23–55 (ANGFIALVNFIDWVKRKKISSADQILTALAVSR) are Cytoplasmic-facing. A helical membrane pass occupies residues 56–76 (IGLLWTLLLNWYLTVLNPAFY). Over 77 to 87 (SVELRITSYNA) the chain is Extracellular. The chain crosses the membrane as a helical span at residues 88–108 (WVVTNHFSMWLAASLSIFYLL). Residues 109–126 (KIANFSNLIFLHLKRRVR) lie on the Cytoplasmic side of the membrane. A helical transmembrane segment spans residues 127–147 (SVILVILLGTLIFLVCHLLVA). Topologically, residues 148-181 (NMDESMWAEEYEGNITGKMKLRNTVHLSYLTVTT) are extracellular. The N-linked (GlcNAc...) asparagine glycan is linked to Asn161. Residues 182 to 202 (LWSFIPFTLSLISFLMLICSL) traverse the membrane as a helical segment. Topologically, residues 203-229 (CKHLKKMQLHGEGSQDLSTKVHIKALQ) are cytoplasmic. A helical membrane pass occupies residues 230 to 250 (TLISFLLLCAIFFLFLIISVW). Topologically, residues 251 to 259 (SPRRLRNDP) are extracellular. The helical transmembrane segment at 260–280 (VVMVSKAVGNIYLAFDSFILI) threads the bilayer. Over 281 to 299 (WRTKKLKHTFLLILCQIRC) the chain is Cytoplasmic.

Belongs to the G-protein coupled receptor T2R family.

It is found in the membrane. Its function is as follows. Receptor that may play a role in the perception of bitterness and is gustducin-linked. May play a role in sensing the chemical composition of the gastrointestinal content. The activity of this receptor may stimulate alpha gustducin, mediate PLC-beta-2 activation and lead to the gating of TRPM5. This is Taste receptor type 2 member 50 (TAS2R50) from Pan paniscus (Pygmy chimpanzee).